Consider the following 555-residue polypeptide: Glutamate--tRNA ligase (555 aa).

The short motif at 100-110 (PNPSGPLHIGH) is the 'HIGH' region element.

The protein belongs to the class-I aminoacyl-tRNA synthetase family. Glutamate--tRNA ligase type 2 subfamily.

It is found in the cytoplasm. It carries out the reaction tRNA(Glu) + L-glutamate + ATP = L-glutamyl-tRNA(Glu) + AMP + diphosphate. Its function is as follows. Catalyzes the attachment of glutamate to tRNA(Glu) in a two-step reaction: glutamate is first activated by ATP to form Glu-AMP and then transferred to the acceptor end of tRNA(Glu). The polypeptide is Glutamate--tRNA ligase (Methanococcus maripaludis (strain C5 / ATCC BAA-1333)).